The sequence spans 169 residues: Mitochondrial ATP-independent inner membrane protease subunit 1b (169 aa).

Residues S47 and K91 contribute to the active site.

This sequence belongs to the peptidase S26 family. IMP1 subfamily. Heterodimer of 2 subunits, IMP1A/B and IMP12.

The protein resides in the mitochondrion inner membrane. Functionally, catalyzes the removal of transit peptides required for the targeting of proteins from the mitochondrial matrix, across the inner membrane, into the inter-membrane space. The sequence is that of Mitochondrial ATP-independent inner membrane protease subunit 1b from Arabidopsis thaliana (Mouse-ear cress).